The sequence spans 305 residues: Heme A synthase (305 aa).

Residues 1–6 (MKKFLK) lie on the Cytoplasmic side of the membrane. A helical membrane pass occupies residues 7–27 (VWSVLTIICMTVVVFGGALVT). Residues 28–63 (KTGSADGCGNSWPLCNGQLVRLTDVTPEKLIEFMHR) are Extracellular-facing. C35 and C42 are joined by a disulfide. Residue E59 is part of the active site. Heme o is bound at residue H62. The chain crosses the membrane as a helical span at residues 64–84 (MTTGISSIFVIVLAICAWIYM). Topologically, residues 85–92 (KNRRETKP) are cytoplasmic. The chain crosses the membrane as a helical span at residues 93–113 (LAIIAVLFLIIQALMGMAAVV). Residues 114–122 (WGQNPYIMA) are Extracellular-facing. A helical transmembrane segment spans residues 123 to 143 (LHFGISIICYASIVLLALMIF). H124 contacts heme o. At 144 to 160 (EVDRKFDARNLVMGTKL) the chain is on the cytoplasmic side. A helical membrane pass occupies residues 161–181 (RINIYALTIYTYLAVYTGALV). The Extracellular segment spans residues 182 to 212 (RHEKASMAVPVWPFENGKFIMPDSVQDYVQY). The helical transmembrane segment at 213-233 (FHRVAAFILIVWLLYVTWLVF) threads the bilayer. Residue H214 coordinates heme b. Topologically, residues 234-240 (RDYRRYR) are cytoplasmic. A helical transmembrane segment spans residues 241–261 (VLTFSMVLSLLFIALQAVTGA). Over 262 to 271 (LSVYTGVNLY) the chain is Extracellular. Residues 272–292 (IALAHSLIITMLFALLCYLCL) traverse the membrane as a helical segment. Position 276 (H276) interacts with heme b. The Cytoplasmic portion of the chain corresponds to 293–305 (LASRSKSNRLRIK).

This sequence belongs to the COX15/CtaA family. Type 1 subfamily. Interacts with CtaB. Heme b serves as cofactor.

The protein localises to the cell membrane. It carries out the reaction Fe(II)-heme o + 2 A + H2O = Fe(II)-heme a + 2 AH2. It functions in the pathway porphyrin-containing compound metabolism; heme A biosynthesis; heme A from heme O: step 1/1. Catalyzes the conversion of heme O to heme A by two successive hydroxylations of the methyl group at C8. The first hydroxylation forms heme I, the second hydroxylation results in an unstable dihydroxymethyl group, which spontaneously dehydrates, resulting in the formyl group of heme A. The polypeptide is Heme A synthase (Listeria welshimeri serovar 6b (strain ATCC 35897 / DSM 20650 / CCUG 15529 / CIP 8149 / NCTC 11857 / SLCC 5334 / V8)).